A 685-amino-acid polypeptide reads, in one-letter code: Multicopper oxidase VdtB (685 aa).

An N-terminal signal peptide occupies residues 1 to 17 (MPAYLLLLACNVLLVLG). Plastocyanin-like domains lie at 26–139 (LTWE…IRRK) and 168–368 (IMML…RYKN). Residue asparagine 71 is glycosylated (N-linked (GlcNAc...) asparagine). Cu cation is bound by residues histidine 75, histidine 77, histidine 119, and histidine 121. N-linked (GlcNAc...) asparagine glycans are attached at residues asparagine 178, asparagine 229, asparagine 253, asparagine 432, and asparagine 475. Positions 466-585 (DDDLIIRTQN…DNGMAMAILD (120 aa)) constitute a Plastocyanin-like 3 domain. Histidine 500 provides a ligand contact to Cu cation. The N-linked (GlcNAc...) asparagine glycan is linked to asparagine 517. Residues 627 to 647 (SLVWAGGAAVVLLSLFIGGLW) traverse the membrane as a helical segment.

This sequence belongs to the multicopper oxidase family.

It is found in the membrane. The enzyme catalyses 4 semiviriditoxin + O2 = 2 (M)-viriditoxin + 2 H2O. It participates in secondary metabolite biosynthesis. Multicopper oxidase; part of the gene cluster that mediates the biosynthesis of viriditoxin, one of the 'classical' secondary metabolites produced by fungi and that has antibacterial activity. The first step is performed by the polyketide synthase VdtA which condenses one acetyl-CoA and 6 malonyl-CoA units to form the heptaketide monomer backbone of viriditoxin. The product of VdtA is then O-methylated on C7 by the O-methyltransferase VdtC. The O-methyl group is important for the stereoselective coupling of the monomers at the final step of viriditoxin biosynthesis. The short-chain dehydrogenase/reductase VdtF then acts as a stereospecific reductase converting the pyrone to dihydropyrone via the reduction of the C3-C4 double bond. The FAD-binding monooxygenase VdtE then converts the ketone group into a methyl-ester group to yield semi-viriditoxin. Finally, the laccase VdtB is involved in dimerization of 2 semi-viriditoxin molecules to yield the final viriditoxin. VdtB is responsible for the regioselective 6,6'-coupling of semi-viriditoxin, which yields (M)-viriditoxin and (P)-viriditoxin at a ratio of 1:2. The non-catalytic carboxylesterase-like protein VdtD affects the stereochemistical outcome of the coupling. The highly reducing polyketide synthase VdtX is not involved in viriditoxin synthesis, but might possibly play a role in the production of additional metabolites not identified yet. This is Multicopper oxidase VdtB from Byssochlamys spectabilis (Paecilomyces variotii).